The primary structure comprises 972 residues: Mast/stem cell growth factor receptor Kit (972 aa).

The signal sequence occupies residues 1-25; sequence MRGARGAWDFLCVLLLLLRVQTGSS. At 26 to 520 the chain is on the extracellular side; that stretch reads QPSVSPEEAS…QIQPHTLFTP (495 aa). Ig-like C2-type domains follow at residues 27 to 112, 121 to 205, 212 to 308, 317 to 410, and 413 to 507; these read PSVS…VFVR, DRSL…LKVR, PVVS…LEVV, PMIN…VYVN, and PEIL…FNFA. Cys-58 and Cys-97 are joined by a disulfide. Asn-130 and Asn-145 each carry an N-linked (GlcNAc...) asparagine glycan. Intrachain disulfides connect Cys-136-Cys-186, Cys-151-Cys-183, and Cys-233-Cys-290. Asn-283, Asn-300, Asn-320, Asn-352, Asn-367, Asn-463, and Asn-486 each carry an N-linked (GlcNAc...) asparagine glycan. Cys-428 and Cys-491 are oxidised to a cystine. A helical membrane pass occupies residues 521–541; the sequence is LLIGFVVVAGMMCIIVMILTY. Topologically, residues 542–972 are cytoplasmic; sequence KYLQKPMYEV…SQPLLVRDDV (431 aa). Phosphotyrosine occurs at positions 543 and 549. Tyr-564 is a binding site for Mg(2+). Tyr-564 and Tyr-566 each carry phosphotyrosine; by autocatalysis. The tract at residues 564-566 is important for interaction with phosphotyrosine-binding proteins; sequence YVY. In terms of domain architecture, Protein kinase spans 585–933; sequence LSFGKTLGAG…ISESTNHIYS (349 aa). ATP-binding positions include 592-599, Lys-619, and 667-673; these read GAGAFGKV and EYCCYGD. Tyr-699 and Tyr-717 each carry phosphotyrosine; by autocatalysis. A Phosphotyrosine modification is found at Tyr-726. Residues Ser-737 and Ser-742 each carry the phosphoserine; by PKC/PRKCA modification. The Proton acceptor role is filled by Asp-788. Arg-792 provides a ligand contact to ATP. Asn-793 and Asp-806 together coordinate Mg(2+). Ser-817 carries the phosphoserine modification. Position 819 is a phosphotyrosine; by autocatalysis (Tyr-819). At Ser-887 the chain carries Phosphoserine. Position 896 is a phosphotyrosine (Tyr-896). A Phosphotyrosine; by autocatalysis modification is found at Tyr-932. Ser-955 is modified (phosphoserine).

The protein belongs to the protein kinase superfamily. Tyr protein kinase family. CSF-1/PDGF receptor subfamily. In terms of assembly, monomer in the absence of bound KITLG/SCF. Homodimer in the presence of bound KITLG/SCF, forming a heterotetramer with two KITLG/SCF molecules. Interacts (via phosphorylated tyrosine residues) with the adapter proteins GRB2 and GRB7 (via SH2 domain), and SH2B2/APS. Interacts (via C-terminus) with MPDZ (via the tenth PDZ domain). Interacts (via phosphorylated tyrosine residues) with PIK3R1 and PIK3CD. Interacts (via phosphorylated tyrosine) with CRK (isoform Crk-II), FYN, SHC1 and MATK/CHK (via SH2 domain). Interacts with LYN and FES/FPS. Interacts (via phosphorylated tyrosine residues) with the protein phosphatases PTPN6/SHP-1 (via SH2 domain), PTPN11/SHP-2 (via SH2 domain) and PTPRU. Interacts with PLCG1. Interacts with DOK1 and TEC. Interacts with IL1RAP (independent of stimulation with KITLG/SCF). A mast cell-specific KITLG/SCF-induced interleukin-33 signaling complex contains IL1RL1, IL1RAP, KIT and MYD88. Post-translationally, ubiquitinated by SOCS6. KIT is rapidly ubiquitinated after autophosphorylation induced by KITLG/SCF binding, leading to internalization and degradation. In terms of processing, autophosphorylated on tyrosine residues. KITLG/SCF binding promotes autophosphorylation. Phosphorylated tyrosine residues are important for interaction with specific binding partners.

Its subcellular location is the cell membrane. It catalyses the reaction L-tyrosyl-[protein] + ATP = O-phospho-L-tyrosyl-[protein] + ADP + H(+). Present in an inactive conformation in the absence of bound ligand. KITLG/SCF binding leads to dimerization and activation by autophosphorylation on tyrosine residues. Activity is down-regulated by PRKCA-mediated phosphorylation on serine residues. Tyrosine-protein kinase that acts as a cell-surface receptor for the cytokine KITLG/SCF and plays an essential role in the regulation of cell survival and proliferation, hematopoiesis, stem cell maintenance, gametogenesis, mast cell development, migration and function, and in melanogenesis. In response to KITLG/SCF binding, KIT can activate several signaling pathways. Phosphorylates PIK3R1, PLCG1, SH2B2/APS and CBL. Activates the AKT1 signaling pathway by phosphorylation of PIK3R1, the regulatory subunit of phosphatidylinositol 3-kinase. Activated KIT also transmits signals via GRB2 and activation of RAS, RAF1 and the MAP kinases MAPK1/ERK2 and/or MAPK3/ERK1. Promotes activation of STAT family members STAT1, STAT3, STAT5A and STAT5B. Activation of PLCG1 leads to the production of the cellular signaling molecules diacylglycerol and inositol 1,4,5-trisphosphate. KIT signaling is modulated by protein phosphatases, and by rapid internalization and degradation of the receptor. Activated KIT promotes phosphorylation of the protein phosphatases PTPN6/SHP-1 and PTPRU, and of the transcription factors STAT1, STAT3, STAT5A and STAT5B. Promotes phosphorylation of PIK3R1, CBL, CRK (isoform Crk-II), LYN, MAPK1/ERK2 and/or MAPK3/ERK1, PLCG1, SRC and SHC1. This chain is Mast/stem cell growth factor receptor Kit (KIT), found in Callithrix jacchus (White-tufted-ear marmoset).